Here is a 336-residue protein sequence, read N- to C-terminus: Large ribosomal subunit protein uL3 (336 aa).

The disordered stretch occupies residues 1–34; that stretch reads MVRHHQPRKGSVAFSPRKRAAKETPRIKSWPQND.

Belongs to the universal ribosomal protein uL3 family. Part of the 50S ribosomal subunit. Forms a cluster with proteins L14 and L24e.

Its function is as follows. One of the primary rRNA binding proteins, it binds directly near the 3'-end of the 23S rRNA, where it nucleates assembly of the 50S subunit. This Methanobrevibacter smithii (strain ATCC 35061 / DSM 861 / OCM 144 / PS) protein is Large ribosomal subunit protein uL3.